The chain runs to 591 residues: L-fucose isomerase (591 aa).

Residues glutamate 337 and aspartate 361 each act as proton acceptor in the active site. Residues glutamate 337, aspartate 361, and histidine 528 each coordinate Mn(2+).

It belongs to the L-fucose isomerase family. In terms of assembly, homohexamer. Requires Mn(2+) as cofactor.

The protein localises to the cytoplasm. The catalysed reaction is L-fucose = L-fuculose. Its pathway is carbohydrate degradation; L-fucose degradation; L-lactaldehyde and glycerone phosphate from L-fucose: step 1/3. Its function is as follows. Converts the aldose L-fucose into the corresponding ketose L-fuculose. The polypeptide is L-fucose isomerase (Escherichia coli O157:H7 (strain EC4115 / EHEC)).